A 314-amino-acid chain; its full sequence is Olfactory receptor 1E2 (314 aa).

At 1 to 25 (MMGQNQTSISDFLLLGLPIQPEQQN) the chain is on the extracellular side. The N-linked (GlcNAc...) asparagine glycan is linked to Asn5. The chain crosses the membrane as a helical span at residues 26-49 (LCYALFLAMYLTTLLGNLLIIVLI). Topologically, residues 50–57 (RLDSHLHT) are cytoplasmic. Residues 58-79 (PMYLFLSNLSFSDLCFSSVTIP) form a helical membrane-spanning segment. The Extracellular segment spans residues 80–100 (KLLQNMQNQDPSIPYADCLTQ). An intrachain disulfide couples Cys97 to Cys189. Residues 101 to 120 (MYFFLLFGDLESFLLVAMAY) traverse the membrane as a helical segment. Topologically, residues 121 to 139 (DRYVAICFPLHYTAIMSPM) are cytoplasmic. A helical transmembrane segment spans residues 140–158 (LCLSLVALSWVLTTFHAML). Over 159–195 (HTLLMARLCFCADNVIPHFFCDMSALLKLACSDTRVN) the chain is Extracellular. A helical transmembrane segment spans residues 196-219 (EWVIFIMGGLIVVIPFLLILGSYA). Residues 220-236 (RIVSSILKVPSSKGICK) are Cytoplasmic-facing. A helical membrane pass occupies residues 237–259 (AFSTCGSHLSVVSLFYGTIIGLY). The Extracellular portion of the chain corresponds to 260-272 (LCPSANSSTLKET). N-linked (GlcNAc...) asparagine glycosylation occurs at Asn265. A helical transmembrane segment spans residues 273 to 292 (VMAMMYTVVTPMLNPFIYSL). Topologically, residues 293–314 (RNRDMKGALERVICKRKNPFLL) are cytoplasmic.

Belongs to the G-protein coupled receptor 1 family.

The protein localises to the cell membrane. Functionally, odorant receptor. This is Olfactory receptor 1E2 (OR1E2) from Gorilla gorilla gorilla (Western lowland gorilla).